The primary structure comprises 290 residues: UPF0761 membrane protein YihY (290 aa).

Helical transmembrane passes span 44–64, 104–124, 140–160, 183–203, 210–230, and 244–264; these read LLSL…FPMF, VGAC…DSAL, FAVY…SLAI, IFPL…VPTI, AIVG…GFAL, and VLAV…IVLL.

This sequence belongs to the UPF0761 family.

The protein localises to the cell inner membrane. The polypeptide is UPF0761 membrane protein YihY (Shigella sonnei (strain Ss046)).